The sequence spans 98 residues: Cell division topological specificity factor (98 aa).

Belongs to the MinE family.

Prevents the cell division inhibition by proteins MinC and MinD at internal division sites while permitting inhibition at polar sites. This ensures cell division at the proper site by restricting the formation of a division septum at the midpoint of the long axis of the cell. The protein is Cell division topological specificity factor of Moorella thermoacetica (strain ATCC 39073 / JCM 9320).